Reading from the N-terminus, the 499-residue chain is Glycerol kinase (499 aa).

Residue T13 coordinates ADP. ATP is bound by residues T13, T14, and S15. Sn-glycerol 3-phosphate is bound at residue T13. R17 provides a ligand contact to ADP. Sn-glycerol 3-phosphate-binding residues include R83, E84, Y135, and D244. Glycerol contacts are provided by R83, E84, Y135, D244, and Q245. ADP contacts are provided by T266 and G309. T266, G309, Q313, and G410 together coordinate ATP. ADP contacts are provided by G410 and N414.

Belongs to the FGGY kinase family.

The enzyme catalyses glycerol + ATP = sn-glycerol 3-phosphate + ADP + H(+). It participates in polyol metabolism; glycerol degradation via glycerol kinase pathway; sn-glycerol 3-phosphate from glycerol: step 1/1. Its activity is regulated as follows. Inhibited by fructose 1,6-bisphosphate (FBP). In terms of biological role, key enzyme in the regulation of glycerol uptake and metabolism. Catalyzes the phosphorylation of glycerol to yield sn-glycerol 3-phosphate. In Paraburkholderia phytofirmans (strain DSM 17436 / LMG 22146 / PsJN) (Burkholderia phytofirmans), this protein is Glycerol kinase.